The primary structure comprises 1098 residues: MDIQQLEVLCKQLYEATDIRIRSEAEKALVTFVSSQDALPKCQLLLQRADSSYAQLLAASTLTKLIQGLSLQERIDIRSYALNYLATVPNLQHFVVQALVSLLAKLTKYGWFDSYKEEMVFQNLLEDVKKFLQGSVEHCTIGVQILSQLVCEMNSVVEMDVQVSFSKMRKIATSFRDQQLLETFLLSCSLLVSARDNSKNISFMDESQQALISHVLRLTKNCLSFDFIGSSTDESADDMNNVQIPTAWRPAFLDSNTLKLFFDLYQILPNGLASYSISCLVQITSVRRSLFNNSERTKFLTHLVEGVKDILTTLHGLSDPDNYHEFCRLLARLKSNYQLGELIAVPCYPEAIQLIAKFTVESLHLWLFAPNSVHYLLTLWQRMVASVPYVKSPDPHLLGTYTPEVIKAYIESRLDAVPVIIRDNLDDPLDDFCMVQQQLEQLSVIERCEYNKTCNLLVQHFDQKAREYENLLQTPNANSIDITIHELQLTWLVYIIGSAIVGRLTVATSDEHDTMDAELVIRVLQLMTLTDARLPQAGCEKLELAILSFLDQVRKMHSSEQAQKANLNKRLSEVFGLTDEQMLLSFINRKIITNLKFWGRSESIITKTLMLLSELSVHFNSVRKLARLEEVQFMLTHHTSEHFPFLGTNSSLSEMRCRTMFYTSLGRLLMFDLGEDEERFYNFLEPLTNQFESLGSVMMDNNIFSNEEAKKVIIGLARDLRGLALPLNARIQYTMLFEWLYYADYLPILLRAMDLWAHDPAVTTPILKLFAELVHCRTQRLAGNVSSPMGILLFREASKLICIYGNRILHQEVPRERLYPMRLKGIAICFLILKNSLGGNYVNCGVFKLYGDDTLDSVLNIIAKLILTIEQRDLIEYPKLSTAYYNLLNCLSQDHVSYLAALEPAAFVYILKSLTKGLAALDSATYISCCTILDSIVSYIFKQLQMKVSTFPNKKLRSLNQENVQFLKVVEMNSELLQSMMSSLLNNVLQEDCRNQWSMSRPLLVLILLYEDYYRSLKDRIICAQPIEKQQTMAQWFDDLMVGIERNVSSKNKEKFTQNMSTFRRDVVNLPKSTAAFSCDRPMCDGGFEPSEPESSPH.

It belongs to the exportin family. Binds to nucleoporins and the GTP-bound form of Ran.

The protein resides in the cytoplasm. It localises to the nucleus. In terms of biological role, may function as a nuclear transport receptor. The chain is Ran-binding protein 16 (Ranbp16) from Drosophila melanogaster (Fruit fly).